The chain runs to 200 residues: Intraflagellar transport protein 43 homolog (200 aa).

Disordered regions lie at residues 56 to 76 (KTGK…IAAP) and 175 to 200 (ERID…SSKY). Positions 175-192 (ERIDAKDQPSDSRSRNAR) are enriched in basic and acidic residues.

Belongs to the IFT43 family. Component of the IFT complex A (IFT-A) composed of at least che-11, daf-10, dyf-2, ift-139, ift-43 and ifta-1. As to expression, expressed in ciliated sensory neurons.

It is found in the cell projection. The protein localises to the cilium. Its function is as follows. As a component of IFT complex A (IFT-A), a complex required for retrograde ciliary transport and entry into cilia of G protein-coupled receptors (GPCRs), it is involved in ciliogenesis. In particular, may act redundantly with the intraflagellar transport protein ift-139 to regulate the transport of specific ciliary cargo proteins such as che-3 which are related to motility. The protein is Intraflagellar transport protein 43 homolog of Caenorhabditis elegans.